The sequence spans 454 residues: Tyrosine aminotransferase (454 aa).

An N-acetylmethionine modification is found at methionine 1. The residue at position 280 (lysine 280) is an N6-(pyridoxal phosphate)lysine. Position 448 is a phosphoserine (serine 448).

Belongs to the class-I pyridoxal-phosphate-dependent aminotransferase family. As to quaternary structure, homodimer. Requires pyridoxal 5'-phosphate as cofactor.

It carries out the reaction L-tyrosine + 2-oxoglutarate = 3-(4-hydroxyphenyl)pyruvate + L-glutamate. It functions in the pathway amino-acid degradation; L-phenylalanine degradation; acetoacetate and fumarate from L-phenylalanine: step 2/6. Its function is as follows. Transaminase involved in tyrosine breakdown. Converts tyrosine to p-hydroxyphenylpyruvate. Can catalyze the reverse reaction, using glutamic acid, with 2-oxoglutarate as cosubstrate (in vitro). Has much lower affinity and transaminase activity towards phenylalanine. This chain is Tyrosine aminotransferase (TAT), found in Homo sapiens (Human).